A 144-amino-acid chain; its full sequence is Putative pre-16S rRNA nuclease (144 aa).

It belongs to the YqgF nuclease family.

The protein localises to the cytoplasm. Functionally, could be a nuclease involved in processing of the 5'-end of pre-16S rRNA. This chain is Putative pre-16S rRNA nuclease, found in Oenococcus oeni (strain ATCC BAA-331 / PSU-1).